Consider the following 177-residue polypeptide: Large ribosomal subunit protein uL6 (177 aa).

It belongs to the universal ribosomal protein uL6 family. As to quaternary structure, part of the 50S ribosomal subunit.

This protein binds to the 23S rRNA, and is important in its secondary structure. It is located near the subunit interface in the base of the L7/L12 stalk, and near the tRNA binding site of the peptidyltransferase center. The protein is Large ribosomal subunit protein uL6 of Rickettsia bellii (strain OSU 85-389).